The chain runs to 97 residues: Na(+)/H(+) antiporter subunit F1 (97 aa).

3 consecutive transmembrane segments (helical) span residues 3–23 (FKIF…AMLI), 35–55 (VVAL…FSIL), and 60–80 (YMLV…AVFS).

It belongs to the CPA3 antiporters (TC 2.A.63) subunit F family. May form a heterooligomeric complex that consists of seven subunits: mnhA1, mnhB1, mnhC1, mnhD1, mnhE1, mnhF1 and mnhG1.

The protein localises to the cell membrane. Functionally, mnh complex is a Na(+)/H(+) antiporter involved in Na(+) excretion. This Staphylococcus epidermidis (strain ATCC 35984 / DSM 28319 / BCRC 17069 / CCUG 31568 / BM 3577 / RP62A) protein is Na(+)/H(+) antiporter subunit F1 (mnhF1).